A 426-amino-acid chain; its full sequence is CinA-like protein (426 aa).

This sequence belongs to the CinA family.

The sequence is that of CinA-like protein from Gloeobacter violaceus (strain ATCC 29082 / PCC 7421).